A 214-amino-acid polypeptide reads, in one-letter code: Probable nicotinate-nucleotide adenylyltransferase (214 aa).

This sequence belongs to the NadD family.

The enzyme catalyses nicotinate beta-D-ribonucleotide + ATP + H(+) = deamido-NAD(+) + diphosphate. It functions in the pathway cofactor biosynthesis; NAD(+) biosynthesis; deamido-NAD(+) from nicotinate D-ribonucleotide: step 1/1. In terms of biological role, catalyzes the reversible adenylation of nicotinate mononucleotide (NaMN) to nicotinic acid adenine dinucleotide (NaAD). The polypeptide is Probable nicotinate-nucleotide adenylyltransferase (Pseudomonas paraeruginosa (strain DSM 24068 / PA7) (Pseudomonas aeruginosa (strain PA7))).